Reading from the N-terminus, the 216-residue chain is Kynurenine formamidase (216 aa).

Tryptophan 25 is a substrate binding site. The Zn(2+) site is built by histidine 55, histidine 59, and aspartate 61. Histidine 65 serves as the catalytic Proton donor/acceptor. The Zn(2+) site is built by histidine 167 and glutamate 179.

The protein belongs to the Cyclase 1 superfamily. KynB family. Homodimer. Zn(2+) serves as cofactor.

It carries out the reaction N-formyl-L-kynurenine + H2O = L-kynurenine + formate + H(+). It functions in the pathway amino-acid degradation; L-tryptophan degradation via kynurenine pathway; L-kynurenine from L-tryptophan: step 2/2. In terms of biological role, catalyzes the hydrolysis of N-formyl-L-kynurenine to L-kynurenine, the second step in the kynurenine pathway of tryptophan degradation. This is Kynurenine formamidase from Cupriavidus necator (strain ATCC 17699 / DSM 428 / KCTC 22496 / NCIMB 10442 / H16 / Stanier 337) (Ralstonia eutropha).